The sequence spans 82 residues: Ice-structuring protein B (82 aa).

Residues 1–23 (MALSLFTVGQLIFLFWTMRITEA) form the signal peptide. The propeptide at 24–44 (RPDPAAKAAPAAAAVPAAAAP) is removed by a dipeptidylpeptidase. Arg-81 is modified (arginine amide).

The protein belongs to the type-I AFP family. Post-translationally, amidated. In terms of tissue distribution, detected in liver (at protein level).

Its subcellular location is the secreted. The protein localises to the extracellular space. Its function is as follows. Contributes to protect fish blood from freezing at subzero sea water temperatures. Lowers the blood freezing point. Binds to nascent ice crystals and prevents further growth. The chain is Ice-structuring protein B from Pseudopleuronectes americanus (Winter flounder).